We begin with the raw amino-acid sequence, 80 residues long: Small membrane A-kinase anchor protein (80 aa).

Glycine 2 carries the N-myristoyl glycine lipid modification.

It belongs to the small membrane AKAP family. Post-translationally, may be palmitoylated at Cys-3.

It localises to the cell membrane. Binds to type I regulatory subunits of protein kinase A and may anchor/target them to the plasma membrane. In Tetraodon nigroviridis (Spotted green pufferfish), this protein is Small membrane A-kinase anchor protein.